The sequence spans 211 residues: Uridine kinase (211 aa).

12-19 (GGSGSGKT) contributes to the ATP binding site.

It belongs to the uridine kinase family.

The protein localises to the cytoplasm. The catalysed reaction is uridine + ATP = UMP + ADP + H(+). The enzyme catalyses cytidine + ATP = CMP + ADP + H(+). The protein operates within pyrimidine metabolism; CTP biosynthesis via salvage pathway; CTP from cytidine: step 1/3. It participates in pyrimidine metabolism; UMP biosynthesis via salvage pathway; UMP from uridine: step 1/1. The sequence is that of Uridine kinase from Geobacillus sp. (strain WCH70).